A 1063-amino-acid chain; its full sequence is Integrin alpha-8 (1063 aa).

The first 38 residues, 1 to 38 (MSPGASRGPRGSQAPLIAPLCCAAAALGMLLWSPACQA), serve as a signal peptide directing secretion. Over 39-1012 (FNLDVEKLTV…TPNVSFSIPL (974 aa)) the chain is Extracellular. FG-GAP repeat units lie at residues 44 to 105 (EKLT…GSAQ), 122 to 183 (NGTK…AYAE), 188 to 240 (RNSN…IANY), 253 to 306 (KQTE…STDM), 307 to 372 (TFIQ…LLFR), 373 to 431 (DPQI…GLNT), and 435 to 498 (QVLQ…LHPM). A glycan (N-linked (GlcNAc...) asparagine) is linked at Asn81. An intrachain disulfide couples Cys96 to Cys106. A glycan (N-linked (GlcNAc...) asparagine) is linked at Asn122. An intrachain disulfide couples Cys150 to Cys171. Residue Asn177 is glycosylated (N-linked (GlcNAc...) asparagine). An intrachain disulfide couples Cys187 to Cys200. Asn239 carries an N-linked (GlcNAc...) asparagine glycan. Glu275, Thr277, Asp279, and Glu283 together coordinate Ca(2+). N-linked (GlcNAc...) asparagine glycans are attached at residues Asn302 and Asn311. Residues Asp329, Asn331, Asp333, Leu335, Asp337, Asp395, Asn397, Asp399, Tyr401, and Asp403 each contribute to the Ca(2+) site. A Cell attachment site motif is present at residues 455–457 (RGD). Residues Asp459, Asp461, Asn463, Tyr465, and Asp467 each contribute to the Ca(2+) site. The N-linked (GlcNAc...) asparagine glycan is linked to Asn504. Intrachain disulfides connect Cys507-Cys518 and Cys524-Cys580. 2 N-linked (GlcNAc...) asparagine glycosylation sites follow: Asn601 and Asn605. 2 cysteine pairs are disulfide-bonded: Cys641–Cys647 and Cys713–Cys726. Asn719, Asn737, Asn753, Asn780, Asn896, and Asn923 each carry an N-linked (GlcNAc...) asparagine glycan. 2 disulfides stabilise this stretch: Cys867–Cys924 and Cys929–Cys934. The N-linked (GlcNAc...) asparagine glycan is linked to Asn1005. A helical transmembrane segment spans residues 1013–1033 (WVIILAILLGLLVLAILTLAL). At 1034–1063 (WKCGFFDRARPPQEDMTDREQLTNDKTPEA) the chain is on the cytoplasmic side.

Belongs to the integrin alpha chain family. In terms of assembly, heterodimer of an alpha and a beta subunit. The alpha subunit is composed of a heavy and a light chain linked by a disulfide bond. Alpha-8 associates with beta-1. Expressed in mesenchymal cells, including alveolar myofibroblasts, kidney mesangial cells and hepatic stellar cells and vascular and visceral smooth muscle (at protein level).

It is found in the membrane. Its subcellular location is the cell membrane. Functionally, integrin alpha-8/beta-1 functions in the genesis of kidney and probably of other organs by regulating the recruitment of mesenchymal cells into epithelial structures. It recognizes the sequence R-G-D in a wide array of ligands including TNC, FN1, SPP1 TGFB1, TGFB3 and VTN. NPNT is probably its functional ligand in kidney genesis. Neuronal receptor for TNC it mediates cell-cell interactions and regulates neurite outgrowth of sensory and motor neurons. This chain is Integrin alpha-8 (ITGA8), found in Homo sapiens (Human).